A 207-amino-acid chain; its full sequence is MEENRDVKNEELEKEEIADEVAEKDNETQESNDAAETNEASKEASENIEAAEEDQEDLVKNQEEENKKLREELDATKDRLLRLTAEYDNYRKRTAKEKEGIYSDAYVDVLKEIVPILDNLERAVAADGSIEDLKKGIEMTIKGCKDSFAKLGVEEIDATGEFDPNLHNAVMHIEDEELGKNVVAEVFQKGYKKDDKIIRHTMVKVAN.

2 stretches are compositionally biased toward basic and acidic residues: residues 1–11 (MEENRDVKNEE) and 57–66 (DLVKNQEEEN). Residues 1–66 (MEENRDVKNE…DLVKNQEEEN (66 aa)) form a disordered region.

Belongs to the GrpE family. In terms of assembly, homodimer.

Its subcellular location is the cytoplasm. Functionally, participates actively in the response to hyperosmotic and heat shock by preventing the aggregation of stress-denatured proteins, in association with DnaK and GrpE. It is the nucleotide exchange factor for DnaK and may function as a thermosensor. Unfolded proteins bind initially to DnaJ; upon interaction with the DnaJ-bound protein, DnaK hydrolyzes its bound ATP, resulting in the formation of a stable complex. GrpE releases ADP from DnaK; ATP binding to DnaK triggers the release of the substrate protein, thus completing the reaction cycle. Several rounds of ATP-dependent interactions between DnaJ, DnaK and GrpE are required for fully efficient folding. The sequence is that of Protein GrpE from Clostridium beijerinckii (strain ATCC 51743 / NCIMB 8052) (Clostridium acetobutylicum).